Here is a 444-residue protein sequence, read N- to C-terminus: Alpha-1,3-mannosyl-glycoprotein 2-beta-N-acetylglucosaminyltransferase (444 aa).

Residues 1-6 (MARISC) lie on the Cytoplasmic side of the membrane. The helical; Signal-anchor for type II membrane protein transmembrane segment at 7–24 (DLRFLLIPAAFMFIYIQM) threads the bilayer. Residues 25 to 444 (RLFQTQSQYA…SVMQLGIRNS (420 aa)) lie on the Lumenal side of the membrane. Residues 61–92 (KQSRIVALEDMKNRQDEELVQLKDLIQTFEKK) are a coiled coil. 4 residues coordinate substrate: arginine 115, aspartate 144, histidine 188, and aspartate 210. A Mn(2+)-binding site is contributed by aspartate 211. Residue aspartate 287 is the Proton acceptor of the active site. Residue serine 318 participates in substrate binding. Asparagine 351 carries N-linked (GlcNAc...) asparagine glycosylation.

This sequence belongs to the glycosyltransferase 13 family. Requires Mn(2+) as cofactor. Glycosylated. In terms of tissue distribution, expressed in roots, stems, leaves and flowers.

Its subcellular location is the golgi apparatus membrane. It carries out the reaction N(4)-(alpha-D-Man-(1-&gt;3)-[alpha-D-Man-(1-&gt;3)-[alpha-D-Man-(1-&gt;6)]-alpha-D-Man-(1-&gt;6)]-beta-D-Man-(1-&gt;4)-beta-D-GlcNAc-(1-&gt;4)-beta-D-GlcNAc)-L-asparaginyl-[protein] (N-glucan mannose isomer 5A1,2) + UDP-N-acetyl-alpha-D-glucosamine = N(4)-{beta-D-GlcNAc-(1-&gt;2)-alpha-D-Man-(1-&gt;3)-[alpha-D-Man-(1-&gt;3)-[alpha-D-Man-(1-&gt;6)]-alpha-D-Man-(1-&gt;6)]-beta-D-Man-(1-&gt;4)-beta-D-GlcNAc-(1-&gt;4)-beta-D-GlcNAc}-L-asparaginyl-[protein] + UDP + H(+). It functions in the pathway protein modification; protein glycosylation. In terms of biological role, initiates complex N-linked carbohydrate formation. Essential for the conversion of high-mannose to hybrid and complex N-glycans. Required for normal root growth and morphology. This Arabidopsis thaliana (Mouse-ear cress) protein is Alpha-1,3-mannosyl-glycoprotein 2-beta-N-acetylglucosaminyltransferase.